Reading from the N-terminus, the 196-residue chain is Large ribosomal subunit protein uL18 (196 aa).

Belongs to the universal ribosomal protein uL18 family. Part of the 50S ribosomal subunit. Contacts the 5S and 23S rRNAs.

Functionally, this is one of the proteins that bind and probably mediate the attachment of the 5S RNA into the large ribosomal subunit, where it forms part of the central protuberance. The sequence is that of Large ribosomal subunit protein uL18 from Saccharolobus islandicus (strain L.S.2.15 / Lassen #1) (Sulfolobus islandicus).